Reading from the N-terminus, the 216-residue chain is Transmembrane protein 186 (216 aa).

The Mitochondrial matrix segment spans residues 1 to 68 (MAFLLRVVPR…IYRFRAIRAI (68 aa)). The disordered stretch occupies residues 31-52 (GDSKRWVGSRSPHSREKSPGTE). Residues 69 to 91 (GFLSRLKLAQTAVTVVALPPGFY) form a helical membrane-spanning segment. Residues 92–103 (CYSQGLMTLSSL) lie on the Mitochondrial intermembrane side of the membrane. The helical transmembrane segment at 104–124 (CLLGGVASFALAMLCWMSHFF) threads the bilayer. Residues 125–216 (RRLVGILYVN…GTLATLKNSK (92 aa)) lie on the Mitochondrial matrix side of the membrane.

This sequence belongs to the TMEM186 family. As to quaternary structure, part of the mitochondrial complex I assembly/MCIA complex that comprises at least the core subunits TMEM126B, NDUFAF1, ECSIT and ACAD9 and complement subunits such as COA1 and TMEM186. Interacts with MT-ND3.

The protein localises to the mitochondrion inner membrane. As part of the MCIA complex, required for efficient assembly of the mitochondrial complex I. The protein is Transmembrane protein 186 of Mus musculus (Mouse).